The following is a 191-amino-acid chain: Somatotropin (191 aa).

His20 contributes to the Zn(2+) binding site. Cys53 and Cys164 are oxidised to a cystine. Glu173 is a binding site for Zn(2+). A disulfide bridge connects residues Cys181 and Cys189.

Belongs to the somatotropin/prolactin family.

The protein resides in the secreted. Functionally, growth hormone plays an important role in growth control and is involved in the regulation of several anabolic processes. Implicated as an osmoregulatory substance important for seawater adaptation. This chain is Somatotropin (GH), found in Chelonia mydas (Green sea-turtle).